The sequence spans 640 residues: RNA polymerase II elongation factor ELL2 (640 aa).

3 disordered regions span residues 172–202 (AVSDTVPERKRSTPMNPANTIRKTHSSSTIS), 290–320 (KLNPSQNAAGTSRSESPVCSSRDAVSSPQKR), and 343–490 (RVPP…EEDL). 2 stretches are compositionally biased toward polar residues: residues 184–202 (TPMNPANTIRKTHSSSTIS) and 291–318 (LNPSQNAAGTSRSESPVCSSRDAVSSPQ). The span at 360 to 372 (AAGLPLPPAAAAI) shows a compositional bias: low complexity. The span at 391-401 (IVNSNSNSPST) shows a compositional bias: polar residues. Basic residues predominate over residues 457-470 (MSHKKSKKKSKKHK). Over residues 471–490 (EKDQIKKHDIETIEEKEEDL) the composition is skewed to basic and acidic residues. Ser503 and Ser580 each carry phosphoserine. Residues 526–636 (PDYLIKYIAI…LIGEFDQQQA (111 aa)) form the OCEL domain.

It belongs to the ELL/occludin family. Component of the super elongation complex (SEC), at least composed of EAF1, EAF2, CDK9, MLLT3/AF9, AFF (AFF1 or AFF4), the P-TEFb complex and ELL (ELL, ELL2 or ELL3). Component of the little elongation complex (LEC), at least composed of ELL (ELL, ELL2 or ELL3), ZC3H8, ICE1 and ICE2. Interacts with AFF4; the interaction is direct and leads to stabilize ELL2 and prevent ELL2 ubiquitination. Interacts with EAF1 and EAF2. Ubiquitinated by SIAH1, leading to its degradation by the proteasome. Interaction with AFF4 stabilizes ELL2 and prevents ELL2 ubiquitination.

The protein resides in the nucleus. Functionally, elongation factor component of the super elongation complex (SEC), a complex required to increase the catalytic rate of RNA polymerase II transcription by suppressing transient pausing by the polymerase at multiple sites along the DNA. Component of the little elongation complex (LEC), a complex required to regulate small nuclear RNA (snRNA) gene transcription by RNA polymerase II and III. Plays a role in immunoglobulin secretion in plasma cells: directs efficient alternative mRNA processing, influencing both proximal poly(A) site choice and exon skipping, as well as immunoglobulin heavy chain (IgH) alternative processing. Probably acts by regulating histone modifications accompanying transition from membrane-specific to secretory IgH mRNA expression. The polypeptide is RNA polymerase II elongation factor ELL2 (ELL2) (Homo sapiens (Human)).